Here is a 101-residue protein sequence, read N- to C-terminus: Gastrin (101 aa).

Positions 1–21 (MQRLCVYVLIFALALAAFSEA) are cleaved as a signal peptide. The tract at residues 22–82 (SWKPRSQQPD…SKKQGPWLEE (61 aa)) is disordered. Glutamine 59 is subject to Pyrrolidone carboxylic acid; in form big gastrin. Glutamine 76 carries the post-translational modification Pyrrolidone carboxylic acid; in form gastrin. At tyrosine 87 the chain carries Sulfotyrosine; partial. Phenylalanine 92 carries the post-translational modification Phenylalanine amide. Phosphoserine is present on serine 96. A propeptide spans 96–101 (SAEDEN) (removed in mature form).

This sequence belongs to the gastrin/cholecystokinin family. In terms of processing, two different processing pathways probably exist in antral G-cells. In the dominant pathway progastrin is cleaved at three sites resulting in two major bioactive gastrins, gastrin-34 and gastrin-17. In the putative alternative pathway, progastrin may be processed only at the most C-terminal dibasic site resulting in the synthesis of gastrin-71. Post-translationally, sulfation enhances proteolytic processing, and blocks peptide degradation. Levels of sulfation differ between proteolytically-cleaved gastrins. Thus, gastrin-6 is almost 73% sulfated, whereas the larger gastrins are less than 50% sulfated. Sulfation levels are also tissue-specific.

It is found in the secreted. Gastrin stimulates the stomach mucosa to produce and secrete hydrochloric acid and the pancreas to secrete its digestive enzymes. It also stimulates smooth muscle contraction and increases blood circulation and water secretion in the stomach and intestine. The polypeptide is Gastrin (GAST) (Homo sapiens (Human)).